We begin with the raw amino-acid sequence, 498 residues long: ATP synthase subunit beta, chloroplastic (498 aa).

At T6 the chain carries Phosphothreonine. At S13 the chain carries Phosphoserine. 172–179 (GGAGVGKT) contributes to the ATP binding site.

The protein belongs to the ATPase alpha/beta chains family. In terms of assembly, F-type ATPases have 2 components, CF(1) - the catalytic core - and CF(0) - the membrane proton channel. CF(1) has five subunits: alpha(3), beta(3), gamma(1), delta(1), epsilon(1). CF(0) has four main subunits: a(1), b(1), b'(1) and c(9-12).

It is found in the plastid. It localises to the chloroplast thylakoid membrane. The enzyme catalyses ATP + H2O + 4 H(+)(in) = ADP + phosphate + 5 H(+)(out). In terms of biological role, produces ATP from ADP in the presence of a proton gradient across the membrane. The catalytic sites are hosted primarily by the beta subunits. In Capsella bursa-pastoris (Shepherd's purse), this protein is ATP synthase subunit beta, chloroplastic.